A 146-amino-acid polypeptide reads, in one-letter code: Holo-[acyl-carrier-protein] synthase (146 aa).

Asp-8 and Glu-61 together coordinate Mg(2+).

The protein belongs to the P-Pant transferase superfamily. AcpS family. Mg(2+) serves as cofactor.

The protein resides in the cytoplasm. It catalyses the reaction apo-[ACP] + CoA = holo-[ACP] + adenosine 3',5'-bisphosphate + H(+). Its function is as follows. Transfers the 4'-phosphopantetheine moiety from coenzyme A to a Ser of acyl-carrier-protein. This chain is Holo-[acyl-carrier-protein] synthase, found in Rhodopseudomonas palustris (strain TIE-1).